Consider the following 113-residue polypeptide: Antisense of depressing factor protein 1 (113 aa).

Residues 1–11 (MGKCSMKKKGV) show a composition bias toward basic residues. The tract at residues 1 to 35 (MGKCSMKKKGVGKNVGVGKKVQKKRSISTAERKRT) is disordered.

This sequence belongs to the ADF1 family.

It localises to the nucleus. Its function is as follows. Transcriptional repressor which negatively regulates transcription of FYV5 by binding to the promoter on the sense strand. The sequence is that of Antisense of depressing factor protein 1 from Saccharomyces cerevisiae (strain ATCC 204508 / S288c) (Baker's yeast).